The sequence spans 629 residues: tRNA uridine 5-carboxymethylaminomethyl modification enzyme MnmG (629 aa).

FAD contacts are provided by residues 15 to 20 (GAGHAG), Val-127, and Ser-182. The disordered stretch occupies residues 203–227 (TPPRVKSSTIDYSKTEEQPGDDHPR). Residues 215–227 (SKTEEQPGDDHPR) are compositionally biased toward basic and acidic residues. 274–288 (GARYCPSIEDKIVRF) is an NAD(+) binding site. Residue Gln-371 coordinates FAD.

Belongs to the MnmG family. Homodimer. Heterotetramer of two MnmE and two MnmG subunits. Requires FAD as cofactor.

The protein resides in the cytoplasm. In terms of biological role, NAD-binding protein involved in the addition of a carboxymethylaminomethyl (cmnm) group at the wobble position (U34) of certain tRNAs, forming tRNA-cmnm(5)s(2)U34. This Listeria welshimeri serovar 6b (strain ATCC 35897 / DSM 20650 / CCUG 15529 / CIP 8149 / NCTC 11857 / SLCC 5334 / V8) protein is tRNA uridine 5-carboxymethylaminomethyl modification enzyme MnmG.